The sequence spans 589 residues: MRAGLVLVDQLIRSGVREAVLCPGSRNSPLNLAFVEAERVGRVRLHVRTDERSAAFLALGLAKVSRRPVPVVMTSGTAVANCLPAMVEATLSGVPLVVLSANRPLSMLGSGANQTIDQAEIFGTHSVCTLNTGELALEGAAAGAAGELRDLVRKLINAATDPIDGGGAHLDVPLREPLVPPTLDELSLWAGEIAAAEDAATTEGAHDSHAPSQPTRGPRKLPYGQVEVDLSRRTLVIAGSVSDVAWARSIMDELADVPTVAEPVAPAPDFPVHSAAVDMFSTQVVSDGEHSAVTIPEQIVVIGRPTLHRGVTKLLANKDINVIALSDTRNVTDVFDNVDEVGSTVRPRGEQPESWLQVARAISDMGVNQVRDGLAEREPFTAVHAVAVVADALRDGDLLVLGASTAVRDASRAGLPFDGVQAIANRGAAGIDGTISTAVGAAMAHAHADPTAIRAPRTIAVMGDLTFAHDLGGLNIGPLEPRPDNLLIVLTNDSGGGIFETLEPGAENLRTFADGTAAFERVFGTPLDLDFAELCAGFGVEHKLATSVEELATVIDEHAEIGGSGITVLEVKVSRRGRQEIEKRIAGTR.

Positions 198–222 (DAATTEGAHDSHAPSQPTRGPRKLP) are disordered.

It belongs to the TPP enzyme family. MenD subfamily. In terms of assembly, homodimer. It depends on Mg(2+) as a cofactor. Requires Mn(2+) as cofactor. Thiamine diphosphate serves as cofactor.

The catalysed reaction is isochorismate + 2-oxoglutarate + H(+) = 5-enolpyruvoyl-6-hydroxy-2-succinyl-cyclohex-3-ene-1-carboxylate + CO2. Its pathway is quinol/quinone metabolism; 1,4-dihydroxy-2-naphthoate biosynthesis; 1,4-dihydroxy-2-naphthoate from chorismate: step 2/7. It participates in quinol/quinone metabolism; menaquinone biosynthesis. Its function is as follows. Catalyzes the thiamine diphosphate-dependent decarboxylation of 2-oxoglutarate and the subsequent addition of the resulting succinic semialdehyde-thiamine pyrophosphate anion to isochorismate to yield 2-succinyl-5-enolpyruvyl-6-hydroxy-3-cyclohexene-1-carboxylate (SEPHCHC). This chain is 2-succinyl-5-enolpyruvyl-6-hydroxy-3-cyclohexene-1-carboxylate synthase, found in Corynebacterium jeikeium (strain K411).